Reading from the N-terminus, the 1336-residue chain is DNA-directed RNA polymerase subunit beta' (1336 aa).

Zn(2+)-binding residues include Cys-60, Cys-62, Cys-75, and Cys-78. Mg(2+) contacts are provided by Asp-535, Asp-537, and Asp-539. The Zn(2+) site is built by Cys-902, Cys-984, Cys-991, and Cys-994.

This sequence belongs to the RNA polymerase beta' chain family. The RNAP catalytic core consists of 2 alpha, 1 beta, 1 beta' and 1 omega subunit. When a sigma factor is associated with the core the holoenzyme is formed, which can initiate transcription. Mg(2+) is required as a cofactor. Zn(2+) serves as cofactor.

It catalyses the reaction RNA(n) + a ribonucleoside 5'-triphosphate = RNA(n+1) + diphosphate. DNA-dependent RNA polymerase catalyzes the transcription of DNA into RNA using the four ribonucleoside triphosphates as substrates. The sequence is that of DNA-directed RNA polymerase subunit beta' from Corynebacterium diphtheriae (strain ATCC 700971 / NCTC 13129 / Biotype gravis).